Reading from the N-terminus, the 207-residue chain is uncharacterized protein (207 aa).

This is an uncharacterized protein from Methanocaldococcus jannaschii (strain ATCC 43067 / DSM 2661 / JAL-1 / JCM 10045 / NBRC 100440) (Methanococcus jannaschii).